The primary structure comprises 123 residues: Prismalin-14 (123 aa).

An N-terminal signal peptide occupies residues 1-16 (MRSLLVLLALAACASA).

As to expression, prismatic layer of shell (at protein level). Expressed primarily in the mantle with highest level in the mantle edge and lower level in the mantle pallium.

The protein resides in the secreted. In terms of biological role, may be involved in calcification of the prismatic layer of the shell. The polypeptide is Prismalin-14 (Margaritifera margaritifera (Freshwater pearl mussel)).